Reading from the N-terminus, the 531-residue chain is Probable calcium-binding mitochondrial carrier F17E5.2 (531 aa).

EF-hand domains are found at residues 70–105, 106–135, 136–171, and 172–207; these read EKEK…QAHI, PASV…NYVI, AHEA…MGVN, and LDDQ…YPST. Residues aspartate 83, aspartate 85, aspartate 87, serine 89, and aspartate 94 each coordinate Ca(2+). Aspartate 149, asparagine 151, aspartate 153, glutamate 155, and glutamate 160 together coordinate Ca(2+). Solcar repeat units lie at residues 242-328, 338-424, and 435-525; these read GVWW…IKRW, LSTI…LKSM, and PGVL…VRKQ. A run of 6 helical transmembrane segments spans residues 248-265, 303-322, 348-361, 399-418, 441-458, and 500-517; these read LVAG…TAPF, GNGI…FMCY, SSAG…IYPM, GYLP…LTVY, LACG…SYPL, and GITP…ISYV.

This sequence belongs to the mitochondrial carrier (TC 2.A.29) family.

It is found in the mitochondrion inner membrane. Functionally, calcium-dependent mitochondrial solute carrier. In Caenorhabditis elegans, this protein is Probable calcium-binding mitochondrial carrier F17E5.2.